The sequence spans 565 residues: Thiol:disulfide interchange protein DsbD (565 aa).

An N-terminal signal peptide occupies residues 1–19 (MAQRIFTLILLLCSTSVFA). Intrachain disulfides connect Cys122–Cys128 and Cys182–Cys304. 7 helical membrane passes run 163–183 (LPFSALWALLIGIGIAFTPCV), 208–228 (LLTFIYVQGMALTYTALGLVV), 243–263 (YVLIGLAIVFTLLAMSMFGLF), 296–316 (IAGLICSPCTTAPLSAILLYI), 323–343 (WLGGGTLYLYALGMGLPLMLI), 357–377 (WMEQVKTAFGFVILALPVFLL), and 384–404 (VWGLRLWSALGVAFFGWAFIT). A Thioredoxin domain is found at 434–565 (WAFGATHTAQ…FSAHLRDRQP (132 aa)). Cys480 and Cys483 form a disulfide bridge.

This sequence belongs to the thioredoxin family. DsbD subfamily.

The protein localises to the cell inner membrane. The catalysed reaction is [protein]-dithiol + NAD(+) = [protein]-disulfide + NADH + H(+). It catalyses the reaction [protein]-dithiol + NADP(+) = [protein]-disulfide + NADPH + H(+). Its function is as follows. Required to facilitate the formation of correct disulfide bonds in some periplasmic proteins and for the assembly of the periplasmic c-type cytochromes. Acts by transferring electrons from cytoplasmic thioredoxin to the periplasm. This transfer involves a cascade of disulfide bond formation and reduction steps. The sequence is that of Thiol:disulfide interchange protein DsbD from Shigella boydii serotype 4 (strain Sb227).